The primary structure comprises 242 residues: Anti-Pycsar protein Apyc1 (242 aa).

The beta-lactamase-like stretch occupies residues 17-216; sequence FNNNALIEQD…EMQSIIKLMH (200 aa). Residues H59, H61, D63, H64, H142, D162, and H216 each coordinate Zn(2+).

The protein belongs to the anti-Pycsar protein Apyc1 family. Homodimer. Zn(2+) is required as a cofactor.

It catalyses the reaction 3',5'-cyclic CMP + H2O = CMP + H(+). The enzyme catalyses 3',5'-cyclic UMP + H2O = UMP + H(+). Counteracts the endogenous Pycsar antiviral defense system. Phosphodiesterase that enables metal-dependent hydrolysis of host cyclic nucleotide Pycsar defense signals such as cCMP and cUMP. The protein is Anti-Pycsar protein Apyc1 of Saccharibacillus brassicae.